A 339-amino-acid polypeptide reads, in one-letter code: Transmembrane protein 120B (339 aa).

Residues 1 to 77 (MSGQLERCER…ASREEAELVQ (77 aa)) adopt a coiled-coil conformation. The next 6 helical transmembrane spans lie at 102–124 (GLYL…AKFA), 132–152 (FKLY…FFLH), 159–179 (VFNF…SILI), 187–207 (GWWV…LTWP), 270–290 (FLLP…VTLF), and 302–322 (QVFV…LTTL).

The protein belongs to the TMEM120 family. As to quaternary structure, heterooligomer with TMEM120A.

It is found in the nucleus inner membrane. In terms of biological role, necessary for efficient adipogenesis. Does not show ion channel activity. This chain is Transmembrane protein 120B (TMEM120B), found in Bos taurus (Bovine).